The sequence spans 450 residues: Beta-glucosidase (450 aa).

The active-site Proton donor is Glu166. The active-site Nucleophile is Glu355.

This sequence belongs to the glycosyl hydrolase 1 family.

It carries out the reaction Hydrolysis of terminal, non-reducing beta-D-glucosyl residues with release of beta-D-glucose.. In Niallia circulans (Bacillus circulans), this protein is Beta-glucosidase (bglA).